Reading from the N-terminus, the 427-residue chain is 3-phosphoshikimate 1-carboxyvinyltransferase (427 aa).

3-phosphoshikimate-binding residues include lysine 20, serine 21, and arginine 25. Phosphoenolpyruvate is bound at residue lysine 20. Residues glycine 92 and arginine 120 each contribute to the phosphoenolpyruvate site. 4 residues coordinate 3-phosphoshikimate: serine 166, glutamine 168, aspartate 312, and lysine 339. Glutamine 168 contributes to the phosphoenolpyruvate binding site. Residue aspartate 312 is the Proton acceptor of the active site. Residues arginine 343 and arginine 385 each coordinate phosphoenolpyruvate.

It belongs to the EPSP synthase family. In terms of assembly, monomer.

It is found in the cytoplasm. It catalyses the reaction 3-phosphoshikimate + phosphoenolpyruvate = 5-O-(1-carboxyvinyl)-3-phosphoshikimate + phosphate. The protein operates within metabolic intermediate biosynthesis; chorismate biosynthesis; chorismate from D-erythrose 4-phosphate and phosphoenolpyruvate: step 6/7. Functionally, catalyzes the transfer of the enolpyruvyl moiety of phosphoenolpyruvate (PEP) to the 5-hydroxyl of shikimate-3-phosphate (S3P) to produce enolpyruvyl shikimate-3-phosphate and inorganic phosphate. In Streptococcus equi subsp. zooepidemicus (strain MGCS10565), this protein is 3-phosphoshikimate 1-carboxyvinyltransferase.